The primary structure comprises 344 residues: Heat-inducible transcription repressor HrcA (344 aa).

This sequence belongs to the HrcA family.

Negative regulator of class I heat shock genes (grpE-dnaK-dnaJ and groELS operons). Prevents heat-shock induction of these operons. The polypeptide is Heat-inducible transcription repressor HrcA (Streptococcus agalactiae serotype Ia (strain ATCC 27591 / A909 / CDC SS700)).